We begin with the raw amino-acid sequence, 346 residues long: N-acetyl-gamma-glutamyl-phosphate reductase (346 aa).

Residue C149 is part of the active site.

The protein belongs to the NAGSA dehydrogenase family. Type 1 subfamily.

Its subcellular location is the cytoplasm. It catalyses the reaction N-acetyl-L-glutamate 5-semialdehyde + phosphate + NADP(+) = N-acetyl-L-glutamyl 5-phosphate + NADPH + H(+). Its pathway is amino-acid biosynthesis; L-arginine biosynthesis; N(2)-acetyl-L-ornithine from L-glutamate: step 3/4. Its function is as follows. Catalyzes the NADPH-dependent reduction of N-acetyl-5-glutamyl phosphate to yield N-acetyl-L-glutamate 5-semialdehyde. The protein is N-acetyl-gamma-glutamyl-phosphate reductase of Oceanobacillus iheyensis (strain DSM 14371 / CIP 107618 / JCM 11309 / KCTC 3954 / HTE831).